Consider the following 218-residue polypeptide: MSFFDSYRKKMQMPSKEEVLPGRVQPIPTAAAHFVSGHPLKGPWPDGMKQVLFGMGCFWGAERLFWQVPGVYVTAVGYAGGITPNPTYEETCTGLTGHAEVVLVVYDPKVVTLNELLALFWEEHDPTQGMRQGNDIGTTYRSVIYTFNAVDRAVAEKSRDAYSQALASRGLGPVTTQIADAPDFYYAEDYHQQYLAKNPDGYCGLRGTGVSCPIPLAH.

The active site involves cysteine 57.

The protein belongs to the MsrA Met sulfoxide reductase family.

The enzyme catalyses L-methionyl-[protein] + [thioredoxin]-disulfide + H2O = L-methionyl-(S)-S-oxide-[protein] + [thioredoxin]-dithiol. It catalyses the reaction [thioredoxin]-disulfide + L-methionine + H2O = L-methionine (S)-S-oxide + [thioredoxin]-dithiol. Has an important function as a repair enzyme for proteins that have been inactivated by oxidation. Catalyzes the reversible oxidation-reduction of methionine sulfoxide in proteins to methionine. The chain is Peptide methionine sulfoxide reductase MsrA from Brucella abortus (strain S19).